The chain runs to 365 residues: Uroporphyrinogen decarboxylase (365 aa).

Substrate is bound by residues 27-31 (RQAGR), D77, Y154, T209, and H327.

It belongs to the uroporphyrinogen decarboxylase family. In terms of assembly, homodimer.

The protein localises to the cytoplasm. The enzyme catalyses uroporphyrinogen III + 4 H(+) = coproporphyrinogen III + 4 CO2. Its pathway is porphyrin-containing compound metabolism; protoporphyrin-IX biosynthesis; coproporphyrinogen-III from 5-aminolevulinate: step 4/4. Its function is as follows. Catalyzes the decarboxylation of four acetate groups of uroporphyrinogen-III to yield coproporphyrinogen-III. In Nitrosospira multiformis (strain ATCC 25196 / NCIMB 11849 / C 71), this protein is Uroporphyrinogen decarboxylase.